Reading from the N-terminus, the 702-residue chain is Arginine decarboxylase 1, chloroplastic (702 aa).

A chloroplast-targeting transit peptide spans 1 to 52 (MPALAFVDTPIDTFSSIFTPSSVSTAVVDGSCHWSPSLSSSLYRIDGWGAPY). Lysine 136 bears the N6-(pyridoxal phosphate)lysine mark. Pyridoxal 5'-phosphate contacts are provided by residues serine 288, glycine 325, and 374–377 (ESGR). 320–330 (IDIGGGLGIDY) is a binding site for substrate. 436 to 437 (YV) serves as a coordination point for substrate. The active-site Proton donor; shared with dimeric partner is the cysteine 524. A substrate-binding site is contributed by aspartate 525. Tyrosine 565 serves as a coordination point for pyridoxal 5'-phosphate.

This sequence belongs to the Orn/Lys/Arg decarboxylase class-II family. SpeA subfamily. As to quaternary structure, homodimer. Only the dimer is catalytically active, as the active sites are constructed of residues from both monomers. May form a head-to-tail homodimer. Homodimer and heterodimer with ADC2. Pyridoxal 5'-phosphate serves as cofactor. Mg(2+) is required as a cofactor.

The protein localises to the plastid. The protein resides in the chloroplast. It localises to the cytoplasm. Its subcellular location is the cytosol. It catalyses the reaction L-arginine + H(+) = agmatine + CO2. Its pathway is amine and polyamine biosynthesis; agmatine biosynthesis; agmatine from L-arginine: step 1/1. Required for the biosynthesis of putrescine. Catalyzes the first step of polyamine (PA) biosynthesis to produce putrescine from arginine. Is a minor contributor to basal arginine decarboxylase (ADC) activity and putrescine biosynthesis. Accumulation of putrescine plays a positive role in freezing tolerance. Production of polyamines is essential for normal seed development. Controls PA homeostasis which is crucial for normal plant growth and development. The chain is Arginine decarboxylase 1, chloroplastic from Arabidopsis thaliana (Mouse-ear cress).